The primary structure comprises 197 residues: Recombination protein RecR (197 aa).

The C4-type zinc finger occupies 55-70 (CVQCRDFTESEICTIC). The Toprim domain occupies 78–173 (QQLCVVESPA…RPSRLAQGMP (96 aa)).

Belongs to the RecR family.

Functionally, may play a role in DNA repair. It seems to be involved in an RecBC-independent recombinational process of DNA repair. It may act with RecF and RecO. The polypeptide is Recombination protein RecR (Xanthomonas axonopodis pv. citri (strain 306)).